A 166-amino-acid polypeptide reads, in one-letter code: Small ribosomal subunit protein uS5 (166 aa).

Residues 11–74 enclose the S5 DRBM domain; the sequence is LVEKLVAVDR…EAARRNMITV (64 aa).

It belongs to the universal ribosomal protein uS5 family. As to quaternary structure, part of the 30S ribosomal subunit. Contacts proteins S4 and S8.

With S4 and S12 plays an important role in translational accuracy. Functionally, located at the back of the 30S subunit body where it stabilizes the conformation of the head with respect to the body. The chain is Small ribosomal subunit protein uS5 from Acinetobacter baumannii (strain ATCC 17978 / DSM 105126 / CIP 53.77 / LMG 1025 / NCDC KC755 / 5377).